A 788-amino-acid polypeptide reads, in one-letter code: Choline transporter-like protein 1 (788 aa).

A helical membrane pass occupies residues 98–118 (FLFFVFLCGWVVVASLGIMWG). N276 is a glycosylation site (N-linked (GlcNAc...) asparagine). 4 helical membrane passes run 329-349 (WWQTLILIFAAGMLSFIWTVI), 352-372 (LLGSLLIWLSIFLVLGALGFG), 409-429 (FVVAIATSVLLVIFLLVILFI), and 458-478 (LFPFLLHIGVFALWGSIAIWL). N497 carries an N-linked (GlcNAc...) asparagine glycan. The next 5 helical transmembrane spans lie at 531–551 (LFAFFWLSCFVTALGDIALAG), 583–603 (LGSIAFGSLIIAIVKIIRVML), 620–640 (WFLMCLKCCFWCLEMFFKFLT), 679–699 (AGILLFLGKAMITLGMGILSF), and 718–738 (YYFVPIVIVVIGSYFMADLFF).

It belongs to the CTL (choline transporter-like) family.

The protein localises to the membrane. The chain is Choline transporter-like protein 1 (chtl-1) from Caenorhabditis briggsae.